Here is a 151-residue protein sequence, read N- to C-terminus: Putative pre-16S rRNA nuclease (151 aa).

This sequence belongs to the YqgF nuclease family.

It is found in the cytoplasm. Functionally, could be a nuclease involved in processing of the 5'-end of pre-16S rRNA. The protein is Putative pre-16S rRNA nuclease of Neisseria gonorrhoeae (strain ATCC 700825 / FA 1090).